The following is a 445-amino-acid chain: POU domain, class 5, transcription factor 1.2 (445 aa).

2 stretches are compositionally biased toward polar residues: residues 76 to 88 (SANQ…QGNP) and 164 to 182 (IFTS…SLDN). Disordered stretches follow at residues 76-116 (SANQ…PSLP) and 139-227 (TTVV…GEME). Residues 183–200 (SRCSSATSSSSGGTNVGT) show a composition bias toward low complexity. Residues 218 to 292 (EEAPNSGEME…LLRSWLHEVE (75 aa)) enclose the POU-specific domain. The segment at residues 312–371 (KRKHRTSIENNVKCTLENYFMQCSKPSAQEIAQIARELNMEKDVVRVWFCNRRQKGKRQV) is a DNA-binding region (homeobox).

It belongs to the POU transcription factor family. Class-5 subfamily. As to quaternary structure, interacts with the transcription factors tcf7l1/tcf3 and vegt. As to expression, initially (stage 9) expressed in all regions of the embryo, becoming localized to the ventroposterior regions by early neurula stages. In adults, expressed at a low level in the brain.

It is found in the nucleus. Its function is as follows. Transcription factor that binds to the octamer motif (5'-ATTTGCAT-3'). Antagonizes the activity of nodal/activin signaling during gastrulation to suppress mesendoderm formation. The chain is POU domain, class 5, transcription factor 1.2 (pou5f1.2) from Xenopus laevis (African clawed frog).